The following is an 84-amino-acid chain: Toxin Tb1 (84 aa).

The signal sequence occupies residues 1-20 (MKGMILFISCLLLIGIVVEC). In terms of domain architecture, LCN-type CS-alpha/beta spans 21-82 (KEGYLMDHEG…VWDRATNKCG (62 aa)). Disulfide bonds link cysteine 31/cysteine 81, cysteine 35/cysteine 57, cysteine 43/cysteine 62, and cysteine 47/cysteine 64. Cysteine amide is present on cysteine 81.

It belongs to the long (4 C-C) scorpion toxin superfamily. Sodium channel inhibitor family. Beta subfamily. In terms of tissue distribution, expressed by the venom gland.

The protein resides in the secreted. Beta toxins bind voltage-independently at site-4 of sodium channels (Nav) and shift the voltage of activation toward more negative potentials thereby affecting sodium channel activation and promoting spontaneous and repetitive firing. Is lethal to mice. In Tityus bahiensis (Brazilian scorpion), this protein is Toxin Tb1.